The sequence spans 348 residues: Rhodopsin (348 aa).

N-acetylmethionine is present on methionine 1. Topologically, residues 1-36 (MNGTEGPNFYVPFSNKTGVVRSPFEYPQYYLAEPWQ) are extracellular. 2 N-linked (GlcNAc...) asparagine glycosylation sites follow: asparagine 2 and asparagine 15. Residues 37-61 (FSMLAAYMFLLIVLGFPINFLTLYV) traverse the membrane as a helical segment. Residues 62-73 (TVQHKKLRTPLN) lie on the Cytoplasmic side of the membrane. Residues 74-96 (YILLNLAVADLFMVFGGFTTTLY) traverse the membrane as a helical segment. At 97 to 110 (TSLHGYFVFGPTGC) the chain is on the extracellular side. Cysteine 110 and cysteine 187 are oxidised to a cystine. Residues 111–133 (NVEGFFATLGGEIALWSLVVLAI) traverse the membrane as a helical segment. Residues 134–136 (ERY) carry the 'Ionic lock' involved in activated form stabilization motif. The Cytoplasmic portion of the chain corresponds to 134 to 152 (ERYVVVCKPMSNFRFGENH). Residues 153–173 (AIMGVAFTWVMALACAAPPLA) form a helical membrane-spanning segment. At 174–202 (GWSRYIPEGMQCSCGIDYYTLKPEINNES) the chain is on the extracellular side. Glutamate 201 is a Zn(2+) binding site. Residues 203-224 (FVIYMFVVHFAIPMIVIFFCYG) traverse the membrane as a helical segment. Residues 225–252 (QLVFTVKEAAAQQQESATTQKAEKEVTR) are Cytoplasmic-facing. A helical transmembrane segment spans residues 253–274 (MVIIMVIAFLICWVPYASVAFY). Over 275-286 (IFTHQGSDFGPI) the chain is Extracellular. Residue glutamine 279 participates in Zn(2+) binding. A helical membrane pass occupies residues 287 to 308 (FMTLPAFFAKSSSIYNPVIYIM). Position 296 is an N6-(retinylidene)lysine (lysine 296). Residues 309–348 (MNKQFRNCMITTLCCGKNPLGDDEASASASKTETSQVAPA) lie on the Cytoplasmic side of the membrane. 2 S-palmitoyl cysteine lipidation sites follow: cysteine 322 and cysteine 323. The segment at 330 to 348 (DDEASASASKTETSQVAPA) is interaction with SAG. Phosphoserine occurs at positions 334 and 338. 2 positions are modified to phosphothreonine: threonine 340 and threonine 342. Serine 343 bears the Phosphoserine mark.

It belongs to the G-protein coupled receptor 1 family. Opsin subfamily. In terms of assembly, homodimer. May form a complex composed of RHO, GRK1 and RCVRN in a Ca(2+)-dependent manner; RCVRN prevents the interaction between GRK1 and RHO. Interacts with GRK1. Interacts (phosphorylated form) with SAG. Interacts with GNAT1. Interacts with GNAT3. SAG and G-proteins compete for a common binding site. Interacts with PRCD; the interaction promotes PRCD stability. Forms a complex with ASAP1 and ARF4. Forms a complex with ASAP1, RAB11A, Rabin8/RAB3IP, ARF4 and RAB11FIP3; the complex regulates Golgi-to-cilia rhodopsin/RHO transport in photoreceptors. Post-translationally, phosphorylated on some or all of the serine and threonine residues present in the C-terminal region. In terms of processing, contains one covalently linked retinal chromophore. Upon light absorption, the covalently bound 11-cis-retinal is converted to all-trans-retinal. After hydrolysis of the Schiff base and release of the covalently bound all-trans-retinal, active rhodopsin is regenerated by binding of a fresh molecule of 11-cis-retinal.

It localises to the membrane. Its subcellular location is the cell projection. The protein localises to the cilium. The protein resides in the photoreceptor outer segment. Functionally, photoreceptor required for image-forming vision at low light intensity. Required for photoreceptor cell viability after birth. Light-induced isomerization of 11-cis to all-trans retinal triggers a conformational change that activates signaling via G-proteins. Subsequent receptor phosphorylation mediates displacement of the bound G-protein alpha subunit by the arrestin SAG and terminates signaling. This chain is Rhodopsin (RHO), found in Canis lupus familiaris (Dog).